The chain runs to 256 residues: Trans-aconitate 2-methyltransferase (256 aa).

It belongs to the methyltransferase superfamily. Tam family.

Its subcellular location is the cytoplasm. The enzyme catalyses trans-aconitate + S-adenosyl-L-methionine = (E)-3-(methoxycarbonyl)pent-2-enedioate + S-adenosyl-L-homocysteine. Functionally, catalyzes the S-adenosylmethionine monomethyl esterification of trans-aconitate. This chain is Trans-aconitate 2-methyltransferase, found in Rhodopseudomonas palustris (strain HaA2).